Consider the following 30-residue polypeptide: AGXXXAHXXYKGPSVVKELVIXXXLGLXAG.

A helical transmembrane segment spans residues 15–30 (VVKELVIXXXLGLXAG).

The protein belongs to the cytochrome c oxidase subunit 5C family.

It is found in the mitochondrion inner membrane. Its function is as follows. This protein is one of the nuclear-coded polypeptide chains of cytochrome c oxidase, the terminal oxidase in mitochondrial electron transport. The polypeptide is Cytochrome c oxidase subunit 5C (COX5C) (Solanum tuberosum (Potato)).